A 301-amino-acid polypeptide reads, in one-letter code: Probable alpha-L-glutamate ligase (301 aa).

In terms of domain architecture, ATP-grasp spans 104 to 287 (HQLLAAQGID…VAIKIVHHVE (184 aa)). ATP is bound by residues Lys141, 178–179 (EF), Asp187, and 211–213 (RSN). Residues Asp248, Glu260, and Asn262 each contribute to the Mg(2+) site. Residues Asp248, Glu260, and Asn262 each contribute to the Mn(2+) site.

It belongs to the RimK family. Mg(2+) serves as cofactor. It depends on Mn(2+) as a cofactor.

The chain is Probable alpha-L-glutamate ligase from Xylella fastidiosa (strain M12).